The primary structure comprises 622 residues: MTTLLSTIDSPKALRQLNEAKLPQVAQEMRDHIIECVSQSGGHLGASLGVVELTIALHYVFNTPDDRLVWDVGHQSYGHKVLTGRRDQLASIRQRHGLSGFTKRSESPYDPFGTGHSSTSISAAMGMARAAKANGIQRKAVAVIGDGAMGAGMAFEALNHAGHDNHDLDLVVVLNDNEMSISPNVGALSSYLNRMLSGGAYNAFRDGTGKVLKTISRSMWDAAKKAEEHVKGLVMPGTLFEELGFTYFGPINGHDFDALLPTLRNVQKLGGPILLHVITKKGKGFPPAEEHPCTYHGVAPFDKDTGIIQSSSGGTSYTKVFAQELCALAEQNPHIHAITAAMREGTGLNLFEKRFPERFHDVGIAEQHAVTFAAGLATEGILPVVAIYSTFMQRAYDQLIHDVALQDLPVIFALDRAGLVGADGATHAGAYDLSYLRTVPGMTIMAPADENELRHMLHTAVALNKPVALRYPRGTALGLPPEPPHVLEIGRGRTLRKGEHAAILAVGQPVHPALEAAAILEQQGISVSVYDARFVKPLDQRLLQEVAMHGVVLVVEENAVQGGFGSAVLESLSNQGALDRGLKIRCMGIPDRYIPHGTQKELRGEIGLDAVGIATTLKELLG.

Residues histidine 74 and 115-117 contribute to the thiamine diphosphate site; that span reads GHS. Aspartate 146 contacts Mg(2+). Residues 147-148, asparagine 177, phenylalanine 285, and glutamate 366 each bind thiamine diphosphate; that span reads GA. Asparagine 177 lines the Mg(2+) pocket.

It belongs to the transketolase family. DXPS subfamily. In terms of assembly, homodimer. Requires Mg(2+) as cofactor. It depends on thiamine diphosphate as a cofactor.

The enzyme catalyses D-glyceraldehyde 3-phosphate + pyruvate + H(+) = 1-deoxy-D-xylulose 5-phosphate + CO2. Its pathway is metabolic intermediate biosynthesis; 1-deoxy-D-xylulose 5-phosphate biosynthesis; 1-deoxy-D-xylulose 5-phosphate from D-glyceraldehyde 3-phosphate and pyruvate: step 1/1. Functionally, catalyzes the acyloin condensation reaction between C atoms 2 and 3 of pyruvate and glyceraldehyde 3-phosphate to yield 1-deoxy-D-xylulose-5-phosphate (DXP). The protein is 1-deoxy-D-xylulose-5-phosphate synthase of Magnetococcus marinus (strain ATCC BAA-1437 / JCM 17883 / MC-1).